The sequence spans 293 residues: Probable 2-(5''-triphosphoribosyl)-3'-dephosphocoenzyme-A synthase (293 aa).

Belongs to the CitG/MdcB family.

The enzyme catalyses 3'-dephospho-CoA + ATP = 2'-(5''-triphospho-alpha-D-ribosyl)-3'-dephospho-CoA + adenine. Functionally, involved in the formation of 2-(5''-phosphoribosyl)-3'-dephosphocoenzyme-A, the prosthetic group of the acyl-carrier protein of the malonate decarboxylase. In Pseudomonas aeruginosa (strain ATCC 15692 / DSM 22644 / CIP 104116 / JCM 14847 / LMG 12228 / 1C / PRS 101 / PAO1), this protein is Probable 2-(5''-triphosphoribosyl)-3'-dephosphocoenzyme-A synthase.